We begin with the raw amino-acid sequence, 150 residues long: Large ribosomal subunit protein bL9 (150 aa).

The protein belongs to the bacterial ribosomal protein bL9 family.

Its function is as follows. Binds to the 23S rRNA. The chain is Large ribosomal subunit protein bL9 from Corynebacterium kroppenstedtii (strain DSM 44385 / JCM 11950 / CIP 105744 / CCUG 35717).